The chain runs to 105 residues: Small ribosomal subunit protein uS10 (105 aa).

This sequence belongs to the universal ribosomal protein uS10 family. Part of the 30S ribosomal subunit.

Functionally, involved in the binding of tRNA to the ribosomes. The sequence is that of Small ribosomal subunit protein uS10 from Rickettsia peacockii (strain Rustic).